A 200-amino-acid polypeptide reads, in one-letter code: Recombination protein RecR (200 aa).

The C4-type zinc finger occupies 57-72; the sequence is CRSCRTLTEEELCPQC. The Toprim domain maps to 80–175; sequence TLLCVVEGPT…VASRIAHGVP (96 aa).

It belongs to the RecR family.

Functionally, may play a role in DNA repair. It seems to be involved in an RecBC-independent recombinational process of DNA repair. It may act with RecF and RecO. The polypeptide is Recombination protein RecR (Pseudomonas savastanoi pv. phaseolicola (strain 1448A / Race 6) (Pseudomonas syringae pv. phaseolicola (strain 1448A / Race 6))).